Reading from the N-terminus, the 954-residue chain is Glycine dehydrogenase (decarboxylating) (954 aa).

At Lys-699 the chain carries N6-(pyridoxal phosphate)lysine.

It belongs to the GcvP family. In terms of assembly, the glycine cleavage system is composed of four proteins: P, T, L and H. The cofactor is pyridoxal 5'-phosphate.

It carries out the reaction N(6)-[(R)-lipoyl]-L-lysyl-[glycine-cleavage complex H protein] + glycine + H(+) = N(6)-[(R)-S(8)-aminomethyldihydrolipoyl]-L-lysyl-[glycine-cleavage complex H protein] + CO2. Its function is as follows. The glycine cleavage system catalyzes the degradation of glycine. The P protein binds the alpha-amino group of glycine through its pyridoxal phosphate cofactor; CO(2) is released and the remaining methylamine moiety is then transferred to the lipoamide cofactor of the H protein. In Nitrobacter winogradskyi (strain ATCC 25391 / DSM 10237 / CIP 104748 / NCIMB 11846 / Nb-255), this protein is Glycine dehydrogenase (decarboxylating).